We begin with the raw amino-acid sequence, 463 residues long: Glucagon-like peptide 1 receptor (463 aa).

Positions 1–21 (MASTPSLLRLALLLLGAVGRA) are cleaved as a signal peptide. At 22-139 (GPRPQGTTVS…KRGERNFPEE (118 aa)) the chain is on the extracellular side. Intrachain disulfides connect Cys46–Cys71, Cys62–Cys104, and Cys85–Cys126. 3 N-linked (GlcNAc...) asparagine glycosylation sites follow: Asn63, Asn82, and Asn115. The chain crosses the membrane as a helical span at residues 140 to 164 (QLLSLYIIYTVGYALSFSALVIASA). Over 165–175 (ILVGFRHLHCT) the chain is Cytoplasmic. Residues 176 to 201 (RNYIHLNLFASFILRALSVFIKDAAL) traverse the membrane as a helical segment. Topologically, residues 202–227 (KWMYSTAAQQHQWDGLLSYQDSLGCR) are extracellular. Cys226 and Cys296 are oxidised to a cystine. A helical membrane pass occupies residues 228-251 (LVFLLMQYCVAANYYWLLVEGVYL). Over 252–265 (YTLLAFSVFSEQRI) the chain is Cytoplasmic. A helical membrane pass occupies residues 266–290 (FKLYLSIGWGVPLLFVIPWGIVKYL). The Extracellular segment spans residues 291–305 (YEDEGCWTRNSNMNY). A helical membrane pass occupies residues 306–328 (WLIIRLPILFAIGVNFLIFIRVI). Residues 329 to 348 (CIVVSKLKANLMCKTDIKCR) are Cytoplasmic-facing. An ADP-ribosylcysteine modification is found at Cys341. An ADP-ribosylarginine modification is found at Arg348. The helical transmembrane segment at 349–370 (LAKSTLTLIPLLGTHEVIFAFV) threads the bilayer. An important for allosteric inhibitor binding region spans residues 352 to 355 (STLT). Residues 371–383 (MDEHARGTLRFIK) lie on the Extracellular side of the membrane. Residues 384–404 (LFTELSFTSFQGLMVAILYCF) traverse the membrane as a helical segment. Topologically, residues 405–463 (VNNEVQMEFRKCWERWRLEHLNIQRDCSMKPLKCPTSSVSSGATVGSSVYAATCQSSYS) are cytoplasmic.

The protein belongs to the G-protein coupled receptor 2 family. In terms of assembly, may form homodimers and heterodimers with GIPR. N-glycosylation enhances cell surface expression and lengthens receptor half-life by preventing degradation in the ER. In terms of tissue distribution, detected in pancreatic islets (at protein level). Detected in pancreatic islets and lungs.

The protein resides in the cell membrane. Its function is as follows. G-protein coupled receptor for glucagon-like peptide 1 (GLP-1). Ligand binding triggers activation of a signaling cascade that leads to the activation of adenylyl cyclase and increased intracellular cAMP levels. Plays a role in regulating insulin secretion in response to GLP-1. The polypeptide is Glucagon-like peptide 1 receptor (Glp1r) (Mus musculus (Mouse)).